Here is a 179-residue protein sequence, read N- to C-terminus: Cytochrome b6-f complex iron-sulfur subunit 1 (179 aa).

The chain crosses the membrane as a helical span at residues leucine 21–isoleucine 43. A Rieske domain is found at glycine 61–leucine 162. [2Fe-2S] cluster contacts are provided by cysteine 108, histidine 110, cysteine 126, and histidine 129. Cysteine 113 and cysteine 128 are joined by a disulfide.

It belongs to the Rieske iron-sulfur protein family. As to quaternary structure, the 4 large subunits of the cytochrome b6-f complex are cytochrome b6, subunit IV (17 kDa polypeptide, PetD), cytochrome f and the Rieske protein, while the 4 small subunits are PetG, PetL, PetM and PetN. The complex functions as a dimer. Requires [2Fe-2S] cluster as cofactor.

Its subcellular location is the cellular thylakoid membrane. The enzyme catalyses 2 oxidized [plastocyanin] + a plastoquinol + 2 H(+)(in) = 2 reduced [plastocyanin] + a plastoquinone + 4 H(+)(out). Functionally, component of the cytochrome b6-f complex, which mediates electron transfer between photosystem II (PSII) and photosystem I (PSI), cyclic electron flow around PSI, and state transitions. This Nostoc sp. (strain PCC 7120 / SAG 25.82 / UTEX 2576) protein is Cytochrome b6-f complex iron-sulfur subunit 1.